Consider the following 61-residue polypeptide: Small ribosomal subunit protein uS14 (61 aa).

The Zn(2+) site is built by C24, C27, C40, and C43.

The protein belongs to the universal ribosomal protein uS14 family. Zinc-binding uS14 subfamily. As to quaternary structure, part of the 30S ribosomal subunit. Contacts proteins S3 and S10. It depends on Zn(2+) as a cofactor.

In terms of biological role, binds 16S rRNA, required for the assembly of 30S particles and may also be responsible for determining the conformation of the 16S rRNA at the A site. The polypeptide is Small ribosomal subunit protein uS14 (Mycoplasmopsis pulmonis (strain UAB CTIP) (Mycoplasma pulmonis)).